We begin with the raw amino-acid sequence, 251 residues long: Pyrroline-5-carboxylate reductase (251 aa).

Belongs to the pyrroline-5-carboxylate reductase family.

The protein localises to the cytoplasm. The enzyme catalyses L-proline + NADP(+) = (S)-1-pyrroline-5-carboxylate + NADPH + 2 H(+). It carries out the reaction L-proline + NAD(+) = (S)-1-pyrroline-5-carboxylate + NADH + 2 H(+). The protein operates within amino-acid biosynthesis; L-proline biosynthesis; L-proline from L-glutamate 5-semialdehyde: step 1/1. In terms of biological role, catalyzes the reduction of 1-pyrroline-5-carboxylate (PCA) to L-proline. The protein is Pyrroline-5-carboxylate reductase (proC) of Methanobrevibacter smithii.